The following is a 320-amino-acid chain: Methenyltetrahydromethanopterin cyclohydrolase (320 aa).

This sequence belongs to the MCH family.

It is found in the cytoplasm. It carries out the reaction 5,10-methenyl-5,6,7,8-tetrahydromethanopterin + H2O = N(5)-formyl-5,6,7,8-tetrahydromethanopterin + H(+). Functionally, catalyzes the hydrolysis of methenyl-H(4)MPT(+) to 5-formyl-H(4)MPT. This is Methenyltetrahydromethanopterin cyclohydrolase from Methanococcoides burtonii (strain DSM 6242 / NBRC 107633 / OCM 468 / ACE-M).